The sequence spans 236 residues: Ubiquinone biosynthesis O-methyltransferase (236 aa).

R39, G59, D80, and M124 together coordinate S-adenosyl-L-methionine.

This sequence belongs to the methyltransferase superfamily. UbiG/COQ3 family.

The enzyme catalyses a 3-demethylubiquinol + S-adenosyl-L-methionine = a ubiquinol + S-adenosyl-L-homocysteine + H(+). The catalysed reaction is a 3-(all-trans-polyprenyl)benzene-1,2-diol + S-adenosyl-L-methionine = a 2-methoxy-6-(all-trans-polyprenyl)phenol + S-adenosyl-L-homocysteine + H(+). It functions in the pathway cofactor biosynthesis; ubiquinone biosynthesis. Functionally, O-methyltransferase that catalyzes the 2 O-methylation steps in the ubiquinone biosynthetic pathway. In Shewanella putrefaciens (strain CN-32 / ATCC BAA-453), this protein is Ubiquinone biosynthesis O-methyltransferase.